The following is a 636-amino-acid chain: Biosynthetic arginine decarboxylase (636 aa).

Lys101 is subject to N6-(pyridoxal phosphate)lysine. 286-296 (FDVGGGLAVDY) serves as a coordination point for substrate.

This sequence belongs to the Orn/Lys/Arg decarboxylase class-II family. SpeA subfamily. Mg(2+) is required as a cofactor. The cofactor is pyridoxal 5'-phosphate.

The enzyme catalyses L-arginine + H(+) = agmatine + CO2. The protein operates within amine and polyamine biosynthesis; agmatine biosynthesis; agmatine from L-arginine: step 1/1. In terms of biological role, catalyzes the biosynthesis of agmatine from arginine. The chain is Biosynthetic arginine decarboxylase from Shewanella amazonensis (strain ATCC BAA-1098 / SB2B).